The chain runs to 318 residues: Protease HtpX homolog (318 aa).

Transmembrane regions (helical) follow at residues 6–26 (TAML…LIGG) and 28–48 (AGMM…YWNS). Residue His130 coordinates Zn(2+). Glu131 is a catalytic residue. Position 134 (His134) interacts with Zn(2+). 2 consecutive transmembrane segments (helical) span residues 145–165 (ITAT…FFGG) and 173–193 (PLGF…AMLV). A Zn(2+)-binding site is contributed by Glu202. The disordered stretch occupies residues 284–318 (NVSTGPVRAVNPTRKSRSVPNTGRGGSQPPRGPWS).

This sequence belongs to the peptidase M48B family. Requires Zn(2+) as cofactor.

It is found in the cell inner membrane. The chain is Protease HtpX homolog from Rhizobium etli (strain CIAT 652).